The chain runs to 546 residues: Chaperonin GroEL (546 aa).

ATP-binding positions include 30 to 33 (TLGP), lysine 51, 87 to 91 (DGTTT), glycine 415, 479 to 481 (NAA), and aspartate 495.

This sequence belongs to the chaperonin (HSP60) family. As to quaternary structure, forms a cylinder of 14 subunits composed of two heptameric rings stacked back-to-back. Interacts with the co-chaperonin GroES.

It localises to the cytoplasm. It carries out the reaction ATP + H2O + a folded polypeptide = ADP + phosphate + an unfolded polypeptide.. In terms of biological role, together with its co-chaperonin GroES, plays an essential role in assisting protein folding. The GroEL-GroES system forms a nano-cage that allows encapsulation of the non-native substrate proteins and provides a physical environment optimized to promote and accelerate protein folding. This is Chaperonin GroEL from Pseudomonas entomophila (strain L48).